The chain runs to 245 residues: 1-(5-phosphoribosyl)-5-[(5-phosphoribosylamino)methylideneamino] imidazole-4-carboxamide isomerase (245 aa).

Catalysis depends on Asp-7, which acts as the Proton acceptor. The Proton donor role is filled by Asp-129.

This sequence belongs to the HisA/HisF family.

The protein resides in the cytoplasm. It carries out the reaction 1-(5-phospho-beta-D-ribosyl)-5-[(5-phospho-beta-D-ribosylamino)methylideneamino]imidazole-4-carboxamide = 5-[(5-phospho-1-deoxy-D-ribulos-1-ylimino)methylamino]-1-(5-phospho-beta-D-ribosyl)imidazole-4-carboxamide. Its pathway is amino-acid biosynthesis; L-histidine biosynthesis; L-histidine from 5-phospho-alpha-D-ribose 1-diphosphate: step 4/9. The chain is 1-(5-phosphoribosyl)-5-[(5-phosphoribosylamino)methylideneamino] imidazole-4-carboxamide isomerase from Shewanella baltica (strain OS195).